A 474-amino-acid chain; its full sequence is MDRKKKPLDVTASSLVDLKAELFRKQEEFKQEKLLKDSGVFGKPKTSNKKPSIWSKQNAGVSSRAEKDAEQKLEEQKTLDKSREKLEEKAKLYEKMTKGDFLDEEVEDMYLVDFTQKIIDKRKEMEVLGATRDSRIKEERDAAVAAANDDDDEEEFSEKDIPPPQDPSEEWVDYVDSLGRSRRCMRKDLPSLLEMDKNLQGRLFVSPANEKTLLSEDMRKELQRQQWEEEEREALKKPMGPIHYEDIRENEARQLGVGYFAFARDKELRNKQMKTLEMLREQTTDQRIKRENIKEKRKAILEARLAKLRQKKMKKSKVDGTEEESRADGVVTEPSEPKSVPAPPPVAQSSKVEVIIQERKDSKPGVPHIREWDRGKDFSFGFWSKKQSELRAERDPEFAPPSNYFVGQKRTGSLSSQPWSRPGAAPSDLGHSSGQSQEPSSSHTSTPASESSPQAPTVTFQTLDDMISYYKQVT.

Disordered stretches follow at residues 39-86 (GVFG…REKL) and 129-170 (GATR…PSEE). Basic and acidic residues-rich tracts occupy residues 64 to 86 (RAEKDAEQKLEEQKTLDKSREKL) and 129 to 142 (GATRDSRIKEERDA). Residues 64-98 (RAEKDAEQKLEEQKTLDKSREKLEEKAKLYEKMTK) adopt a coiled-coil conformation. A compositionally biased stretch (acidic residues) spans 148–157 (NDDDDEEEFS). Ser206 carries the phosphoserine modification. Residues 276-317 (LEMLREQTTDQRIKRENIKEKRKAILEARLAKLRQKKMKKSK) adopt a coiled-coil conformation. Disordered regions lie at residues 309-372 (RQKK…IREW) and 389-461 (ELRA…VTFQ). Basic and acidic residues-rich tracts occupy residues 316-327 (SKVDGTEEESRA) and 356-372 (IQERKDSKPGVPHIREW). Positions 410–419 (RTGSLSSQPW) are enriched in polar residues. Low complexity predominate over residues 430–453 (GHSSGQSQEPSSSHTSTPASESSP).

The protein resides in the nucleus. In terms of biological role, probably involved in neuronal development. In Rattus norvegicus (Rat), this protein is Coiled-coil domain-containing protein 174 (Ccdc174).